Consider the following 479-residue polypeptide: Siroheme synthase (479 aa).

Residues 1–202 (MNYLPIFLDL…GRDSEAEAQL (202 aa)) are precorrin-2 dehydrogenase /sirohydrochlorin ferrochelatase. NAD(+)-binding positions include 22–23 (ET) and 43–44 (PA). Serine 128 carries the post-translational modification Phosphoserine. Residues 217–479 (GEVYLVGAGP…TPLEAPDHLA (263 aa)) are uroporphyrinogen-III C-methyltransferase. Residue proline 226 coordinates S-adenosyl-L-methionine. The Proton acceptor role is filled by aspartate 249. The active-site Proton donor is the lysine 271. Residues 302 to 304 (GGD), isoleucine 307, 332 to 333 (TA), methionine 384, and glycine 413 contribute to the S-adenosyl-L-methionine site.

It in the N-terminal section; belongs to the precorrin-2 dehydrogenase / sirohydrochlorin ferrochelatase family. This sequence in the C-terminal section; belongs to the precorrin methyltransferase family.

It catalyses the reaction uroporphyrinogen III + 2 S-adenosyl-L-methionine = precorrin-2 + 2 S-adenosyl-L-homocysteine + H(+). The catalysed reaction is precorrin-2 + NAD(+) = sirohydrochlorin + NADH + 2 H(+). The enzyme catalyses siroheme + 2 H(+) = sirohydrochlorin + Fe(2+). It participates in cofactor biosynthesis; adenosylcobalamin biosynthesis; precorrin-2 from uroporphyrinogen III: step 1/1. Its pathway is cofactor biosynthesis; adenosylcobalamin biosynthesis; sirohydrochlorin from precorrin-2: step 1/1. It functions in the pathway porphyrin-containing compound metabolism; siroheme biosynthesis; precorrin-2 from uroporphyrinogen III: step 1/1. The protein operates within porphyrin-containing compound metabolism; siroheme biosynthesis; siroheme from sirohydrochlorin: step 1/1. It participates in porphyrin-containing compound metabolism; siroheme biosynthesis; sirohydrochlorin from precorrin-2: step 1/1. Multifunctional enzyme that catalyzes the SAM-dependent methylations of uroporphyrinogen III at position C-2 and C-7 to form precorrin-2 via precorrin-1. Then it catalyzes the NAD-dependent ring dehydrogenation of precorrin-2 to yield sirohydrochlorin. Finally, it catalyzes the ferrochelation of sirohydrochlorin to yield siroheme. In Thiobacillus denitrificans (strain ATCC 25259 / T1), this protein is Siroheme synthase.